A 305-amino-acid chain; its full sequence is Dihydroorotate dehydrogenase B (NAD(+)), catalytic subunit (305 aa).

FMN contacts are provided by residues Ser23 and Lys47–Gly48. Residues Lys47 and Asn71–Leu75 each bind substrate. Asn101 and Asn129 together coordinate FMN. Asn129 is a substrate binding site. The active-site Nucleophile is Cys132. Residues Lys167 and Ile193 each contribute to the FMN site. Substrate is bound at residue Asn194–Thr195. FMN contacts are provided by residues Gly219, Gly245 to Gly246, and Gly267 to Thr268.

Belongs to the dihydroorotate dehydrogenase family. Type 1 subfamily. In terms of assembly, heterotetramer of 2 PyrK and 2 PyrD type B subunits. The cofactor is FMN.

The protein localises to the cytoplasm. The enzyme catalyses (S)-dihydroorotate + NAD(+) = orotate + NADH + H(+). It participates in pyrimidine metabolism; UMP biosynthesis via de novo pathway; orotate from (S)-dihydroorotate (NAD(+) route): step 1/1. In terms of biological role, catalyzes the conversion of dihydroorotate to orotate with NAD(+) as electron acceptor. This is Dihydroorotate dehydrogenase B (NAD(+)), catalytic subunit (pyrD) from Geobacter sp. (strain M21).